The chain runs to 148 residues: Small ribosomal subunit protein eS6 (148 aa).

The protein belongs to the eukaryotic ribosomal protein eS6 family.

The chain is Small ribosomal subunit protein eS6 from Pyrobaculum islandicum (strain DSM 4184 / JCM 9189 / GEO3).